Here is a 184-residue protein sequence, read N- to C-terminus: MAKYNEKELADTSKFLSFVLRHKPEAIGIVLDREGWADIDKLILCAQKAGKRLTRALLDTVVATSDKKRFSHSSDGRCIRAVQGHSTSQVAISFAEKTPPQFLYHGTASRFLDEIKKQGLIAGERHYVHLSADEATARKVGARHGSPVILTVKAQEMAKRGIPFWQAENGVWLTSTVAVEFLEW.

Belongs to the KptA/TPT1 family.

In terms of biological role, removes the 2'-phosphate from RNA via an intermediate in which the phosphate is ADP-ribosylated by NAD followed by a presumed transesterification to release the RNA and generate ADP-ribose 1''-2''-cyclic phosphate (APPR&gt;P). May function as an ADP-ribosylase. This Escherichia coli O8 (strain IAI1) protein is Probable RNA 2'-phosphotransferase.